A 414-amino-acid chain; its full sequence is MRVAVLSIGDELLSGEVVDTNASHIADRLFQAGGRVERHLTVPDDAEAIASALTELGARSDAVIVTGGLGPTPDDLTAEAAARAAGTELELSSEALDHLERFAQRITGELHPANRRQALLPKGCRLIPNPLGTALGFVVRIGQADCFFMPGVPYEMERMLEETVLPELTGRFEAGWQRVTLKLFGIAEAAIAELLEGAIPEGSPVQLAYCVKFPEIHLILRATASDAPFLQQAAGELRQRLSAYLFAEDREEMDDRLALLLRESGLTLALAESCTGGMIAARITAVAGSSAYFLEGNVTYSNEAKTRMLQVPAPLIAEHGAVSAEVARAMAVGAREAAGSDLALSVTGIAGPDGGTPEKPVGTVYLALVDQGSCRVERFNFQGDRDRVRSITCFTALDWLRRYLLTRKTTPGRG.

This sequence belongs to the CinA family.

This chain is CinA-like protein, found in Citrifermentans bemidjiense (strain ATCC BAA-1014 / DSM 16622 / JCM 12645 / Bem) (Geobacter bemidjiensis).